The following is a 288-amino-acid chain: Cell division protein ZipA (288 aa).

A topological domain (periplasmic) is located at residue Met1. The chain crosses the membrane as a helical span at residues 2–22 (EIGLREWLIVIGIIVIAGILF). Residues 23 to 288 (DGWRRMRGGK…FERRALTQKR (266 aa)) lie on the Cytoplasmic side of the membrane. 2 stretches are compositionally biased toward basic and acidic residues: residues 66-75 (KEPQLDEHDL) and 83-93 (REAREPRESGS). The tract at residues 66–141 (KEPQLDEHDL…AKSSPAVADK (76 aa)) is disordered. Positions 106–117 (GDLNLDLDLDGG) are enriched in low complexity.

It belongs to the ZipA family. In terms of assembly, interacts with FtsZ via their C-terminal domains.

The protein resides in the cell inner membrane. In terms of biological role, essential cell division protein that stabilizes the FtsZ protofilaments by cross-linking them and that serves as a cytoplasmic membrane anchor for the Z ring. Also required for the recruitment to the septal ring of downstream cell division proteins. In Pseudomonas fluorescens (strain Pf0-1), this protein is Cell division protein ZipA.